A 161-amino-acid polypeptide reads, in one-letter code: Large ribosomal subunit protein mL50 (161 aa).

A disordered region spans residues 27 to 51 (WGGHSKKEEKEVEENSIIPQEKKEP).

It belongs to the mitochondrion-specific ribosomal protein mL50 family. In terms of assembly, component of the mitochondrial ribosome large subunit (39S) which comprises a 16S rRNA and about 50 distinct proteins.

Its subcellular location is the mitochondrion. In Gallus gallus (Chicken), this protein is Large ribosomal subunit protein mL50 (MRPL50).